The primary structure comprises 199 residues: MAFELPNLPYAYDALEPHIDKQTMEIHHDKHHNTYVTKLNSAVEGTDLEAKSIEEIVANLDSVPSNIQTAVRNNGGGHLNHSLFWELLSPNSEEKGEVVDKIKEQWGSLDEFKKEFADKAAARFGSGWAWLVVNNGQLEIVTTPNQDNPITEGKTPILGLDVWEHAYYLKYQNKRPDYINAFWNVVNWEKVNELYNATK.

Fe(3+) contacts are provided by H27, H81, D161, and H165. Residues H27, H81, D161, and H165 each contribute to the Mn(2+) site.

It belongs to the iron/manganese superoxide dismutase family. In terms of assembly, homodimer. Mn(2+) serves as cofactor. It depends on Fe(3+) as a cofactor.

The catalysed reaction is 2 superoxide + 2 H(+) = H2O2 + O2. Its function is as follows. Destroys superoxide anion radicals which are normally produced within the cells and which are toxic to biological systems. Catalyzes the dismutation of superoxide anion radicals into O2 and H2O2 by successive reduction and oxidation of the transition metal ion at the active site. This is Superoxide dismutase [Mn/Fe] (sodA) from Staphylococcus epidermidis (strain ATCC 35984 / DSM 28319 / BCRC 17069 / CCUG 31568 / BM 3577 / RP62A).